The chain runs to 379 residues: Homoserine O-succinyltransferase (379 aa).

Residues 51 to 360 (NAVLICHALS…DSPYGHDAFL (310 aa)) form the AB hydrolase-1 domain. Serine 157 (nucleophile) is an active-site residue. Position 227 (arginine 227) interacts with substrate. Active-site residues include aspartate 323 and histidine 356. Aspartate 357 contacts substrate.

This sequence belongs to the AB hydrolase superfamily. MetX family. Homodimer.

It localises to the cytoplasm. The catalysed reaction is L-homoserine + succinyl-CoA = O-succinyl-L-homoserine + CoA. The protein operates within amino-acid biosynthesis; L-methionine biosynthesis via de novo pathway; O-succinyl-L-homoserine from L-homoserine: step 1/1. Functionally, transfers a succinyl group from succinyl-CoA to L-homoserine, forming succinyl-L-homoserine. This is Homoserine O-succinyltransferase from Pseudomonas putida (strain W619).